Reading from the N-terminus, the 97-residue chain is Secreted Ly-6/uPAR domain-containing protein 2 (97 aa).

The signal sequence occupies residues 1–22 (MQLGTGLLLAAVLSLQLAAAEA). 5 cysteine pairs are disulfide-bonded: C25/C47, C28/C34, C40/C68, C72/C88, and C89/C94. A UPAR/Ly6 domain is found at 25 to 95 (CHQCTGFGGC…IACCQTSLCN (71 aa)).

In terms of assembly, interacts with CHRNA3, CHRNA4, CHRNA5, CHRNA7, CHRNB2 and CHRNB4. Interacts with CHRM1 and CHRM3 probably in an allosteric manner. Expressed at highest levels in cervix and esophagus, followed by adult and fetal skin. Expressed at lower levels in brain, lung, stomach, small intestine, colon, rectum, uterus, and thymus. Not detected in spleen nor bone marrow. Up-regulated 3-fold in psoriatic lesional skin. In the epidermis, predominantly produced by keratinocytes of the suprabasal epidermal compartment (at protein level). In attached gingiva, produced at highest levels by basal cells located in the lowermost epithelial layers (at protein level). Detected in serum (at protein level).

The protein localises to the secreted. In terms of biological role, binds and may modulate the functional properties of nicotinic and muscarinic acetylcholine receptors. May regulate keratinocytes proliferation, differentiation and apoptosis. In vitro moderately inhibits ACh-evoked currents of alpha-3:beta-2-containing nAChRs and strongly these of alpha-4:beta-2-containing nAChRs, modulates alpha-7-containing nAChRs, and inhibits nicotine-induced signaling probably implicating alpha-3:beta-4-containing nAChRs. Proposed to act on alpha-3:beta-2 and alpha-7 nAChRs in an orthosteric, and on mAChRs, such as CHRM1 and CHRM3, in an allosteric manner. The sequence is that of Secreted Ly-6/uPAR domain-containing protein 2 from Homo sapiens (Human).